The following is a 147-amino-acid chain: Hemoglobin subunit beta-1 (147 aa).

Positions 3-147 constitute a Globin domain; it reads EWTAAERRHV…VVSALGRQYH (145 aa). His64 and His93 together coordinate heme b.

Belongs to the globin family. In terms of assembly, hb 1 is a heterotetramer of two alpha-1 and two beta-1 chains. Red blood cells.

In terms of biological role, involved in oxygen transport from gills to the various peripheral tissues. This Gadus morhua (Atlantic cod) protein is Hemoglobin subunit beta-1 (hbb1).